A 238-amino-acid chain; its full sequence is Pyridoxine 5'-phosphate synthase (238 aa).

Position 9 (N9) interacts with 3-amino-2-oxopropyl phosphate. 11–12 is a 1-deoxy-D-xylulose 5-phosphate binding site; it reads DH. R20 lines the 3-amino-2-oxopropyl phosphate pocket. H45 serves as the catalytic Proton acceptor. Positions 47 and 52 each coordinate 1-deoxy-D-xylulose 5-phosphate. E72 (proton acceptor) is an active-site residue. Residue T102 coordinates 1-deoxy-D-xylulose 5-phosphate. H189 functions as the Proton donor in the catalytic mechanism. Residues G190 and 211–212 contribute to the 3-amino-2-oxopropyl phosphate site; that span reads GH.

Belongs to the PNP synthase family. In terms of assembly, homooctamer; tetramer of dimers.

The protein resides in the cytoplasm. It carries out the reaction 3-amino-2-oxopropyl phosphate + 1-deoxy-D-xylulose 5-phosphate = pyridoxine 5'-phosphate + phosphate + 2 H2O + H(+). Its pathway is cofactor biosynthesis; pyridoxine 5'-phosphate biosynthesis; pyridoxine 5'-phosphate from D-erythrose 4-phosphate: step 5/5. Catalyzes the complicated ring closure reaction between the two acyclic compounds 1-deoxy-D-xylulose-5-phosphate (DXP) and 3-amino-2-oxopropyl phosphate (1-amino-acetone-3-phosphate or AAP) to form pyridoxine 5'-phosphate (PNP) and inorganic phosphate. In Ehrlichia ruminantium (strain Welgevonden), this protein is Pyridoxine 5'-phosphate synthase.